Consider the following 237-residue polypeptide: (5-formylfuran-3-yl)methyl phosphate synthase (237 aa).

Lys27 (schiff-base intermediate with substrate) is an active-site residue. The Proton acceptor role is filled by Lys85.

This sequence belongs to the MfnB family.

It carries out the reaction 2 D-glyceraldehyde 3-phosphate = 4-(hydroxymethyl)-2-furancarboxaldehyde phosphate + phosphate + 2 H2O. The protein operates within cofactor biosynthesis; methanofuran biosynthesis. In terms of biological role, catalyzes the formation of 4-(hydroxymethyl)-2-furancarboxaldehyde phosphate (4-HFC-P) from two molecules of glyceraldehyde-3-P (GA-3-P). This is (5-formylfuran-3-yl)methyl phosphate synthase from Methanobrevibacter smithii (strain ATCC 35061 / DSM 861 / OCM 144 / PS).